We begin with the raw amino-acid sequence, 398 residues long: Phosphoglycerate kinase (398 aa).

Substrate is bound by residues Asp24–Asn26, Arg40, His63–Arg66, Arg122, and Arg155. Residues Lys206, Gly294, Glu325, and Gly354–Ser357 contribute to the ATP site.

This sequence belongs to the phosphoglycerate kinase family. In terms of assembly, monomer.

It localises to the cytoplasm. It catalyses the reaction (2R)-3-phosphoglycerate + ATP = (2R)-3-phospho-glyceroyl phosphate + ADP. The protein operates within carbohydrate degradation; glycolysis; pyruvate from D-glyceraldehyde 3-phosphate: step 2/5. The chain is Phosphoglycerate kinase from Picosynechococcus sp. (strain ATCC 27264 / PCC 7002 / PR-6) (Agmenellum quadruplicatum).